A 692-amino-acid polypeptide reads, in one-letter code: Glycine--tRNA ligase beta subunit (692 aa).

Belongs to the class-II aminoacyl-tRNA synthetase family. As to quaternary structure, tetramer of two alpha and two beta subunits.

The protein localises to the cytoplasm. The catalysed reaction is tRNA(Gly) + glycine + ATP = glycyl-tRNA(Gly) + AMP + diphosphate. This is Glycine--tRNA ligase beta subunit from Pseudoalteromonas atlantica (strain T6c / ATCC BAA-1087).